Reading from the N-terminus, the 244-residue chain is 1-(5-phosphoribosyl)-5-[(5-phosphoribosylamino)methylideneamino] imidazole-4-carboxamide isomerase (244 aa).

The active-site Proton acceptor is the aspartate 9. Aspartate 131 acts as the Proton donor in catalysis.

This sequence belongs to the HisA/HisF family.

The protein resides in the cytoplasm. The catalysed reaction is 1-(5-phospho-beta-D-ribosyl)-5-[(5-phospho-beta-D-ribosylamino)methylideneamino]imidazole-4-carboxamide = 5-[(5-phospho-1-deoxy-D-ribulos-1-ylimino)methylamino]-1-(5-phospho-beta-D-ribosyl)imidazole-4-carboxamide. It participates in amino-acid biosynthesis; L-histidine biosynthesis; L-histidine from 5-phospho-alpha-D-ribose 1-diphosphate: step 4/9. The protein is 1-(5-phosphoribosyl)-5-[(5-phosphoribosylamino)methylideneamino] imidazole-4-carboxamide isomerase of Campylobacter jejuni subsp. jejuni serotype O:6 (strain 81116 / NCTC 11828).